A 481-amino-acid chain; its full sequence is O-acetyltransferase andG (481 aa).

Belongs to the fumigaclavine B O-acetyltransferase family. Monomer.

It participates in secondary metabolite biosynthesis; terpenoid biosynthesis. Its function is as follows. O-acetyltransferase; part of the gene cluster that mediates the biosynthesis of anditomin, a fungal meroterpenoid. The first step of the pathway is the synthesis of 3,5-dimethylorsellinic acid (DMOA) by the polyketide synthase andM. DMOA is then converted to the phthalide compound 5,7-dihydroxy-4,6-dimethylphthalide (DHDMP) by the cytochrome P450 monooxygenase andK, which is further prenylated by the prenyltransferase andD to yield farnesyl-DHDMP. Further epoxidation by the FAD-dependent monooxygenase andE leads to epoxyfarnesyl-DHDMP. The next step involves the terpene cyclase andB that converts epoxyfarnesyl-DHDMP into preandiloid A through opening of the epoxide ring followed by the cyclization of the farnesyl moiety. Preandiloid A is in turn oxidized at the C-3 hydroxyl group to yield preandiloid B by the dehydrogenase andC. The dioxygenase andA is solely responsible for the dehydrogenation of preandiloid B leading to the enone preandiloid C, as well as for the intriguing structural rearrangement to generate the bicyclo[2.2.2]octane core, transforming preandiloid C into andiconin. FAD-binding monooxygenase andJ then produces andilesin D which is reduced by dehydrogenase andI to yield andilesin A. Action of acetyltransferase andG followed by a spontaneous acetate elimination leads then to andilesin B, which is in turn substrate of the short chain dehydrogenase andH to yield andilesin C. Finally, the dioxygenase andF catalyzes the transformation of andilesin C to anditomin. The polypeptide is O-acetyltransferase andG (Emericella variicolor (Aspergillus stellatus)).